A 349-amino-acid chain; its full sequence is Ion-translocating oxidoreductase complex subunit D (349 aa).

4 helical membrane-spanning segments follow: residues 20–40, 42–62, 83–105, and 120–140; these read IMFL…YFFG, GVLI…IIIL, VLLG…CFFA, and IFNP…VHMT. Threonine 184 bears the FMN phosphoryl threonine mark. 5 consecutive transmembrane segments (helical) span residues 212 to 232, 236 to 256, 263 to 283, 291 to 311, and 319 to 339; these read IVSI…CFLL, VICW…SSIT, FFCS…AFFI, SCTK…VWII, and DGIA…DAYL.

It belongs to the NqrB/RnfD family. In terms of assembly, the complex is composed of six subunits: RnfA, RnfB, RnfC, RnfD, RnfE and RnfG. The cofactor is FMN.

It localises to the cell inner membrane. In terms of biological role, part of a membrane-bound complex that couples electron transfer with translocation of ions across the membrane. This is Ion-translocating oxidoreductase complex subunit D from Buchnera aphidicola subsp. Schizaphis graminum (strain Sg).